A 308-amino-acid chain; its full sequence is Glutaminase (308 aa).

Substrate-binding residues include S66, N117, E161, N168, Y192, Y244, and V262.

The protein belongs to the glutaminase family. Homotetramer.

It catalyses the reaction L-glutamine + H2O = L-glutamate + NH4(+). This is Glutaminase from Photorhabdus laumondii subsp. laumondii (strain DSM 15139 / CIP 105565 / TT01) (Photorhabdus luminescens subsp. laumondii).